Here is a 580-residue protein sequence, read N- to C-terminus: G1/S-specific cyclin CLN3 (580 aa).

Residues 454–469 (FTPTSSSSSPSPFNSP) are compositionally biased toward low complexity. Disordered stretches follow at residues 454–498 (FTPT…QNSF) and 546–580 (MATA…KKTR). Composition is skewed to polar residues over residues 470–480 (YKTSSSMTTPD) and 563–580 (TSSV…KKTR).

This sequence belongs to the cyclin family.

In terms of biological role, essential for the control of the cell cycle at the G1/S (start) transition. CLN3 may be an upstream activator of the G1 cyclins which directly catalyze start. This Saccharomyces cerevisiae (strain ATCC 204508 / S288c) (Baker's yeast) protein is G1/S-specific cyclin CLN3 (CLN3).